Here is a 58-residue protein sequence, read N- to C-terminus: Lantibiotic macedovicin (58 aa).

A propeptide spanning residues 1–25 (MMNATENQIFVETVSDQELEMLIGG) is cleaved from the precursor. Thr33 and Thr35 each carry 2,3-didehydrobutyrine. Cross-links (beta-methyllanthionine (Thr-Cys)) lie at residues 33–38 (TLTKDC) and 35–57 (TKDC…CKNC). A disulfide bond links Cys46 and Cys54.

Post-translationally, maturation of macedovicin involves the enzymatic dehydration of Thr-33 and Thr-35 into dehydrobutyrine residues, that can form a beta-methyllanthionine bond with Cys-38 and Cys-57, respectively. This is followed by membrane translocation and cleavage of the modified precursor.

The protein resides in the secreted. Functionally, lanthionine-containing peptide antibiotic (lantibiotic) active on Gram-positive bacteria. Macedovicin inhibits a broad spectrum of lactic acid bacteria, several food spoilage species (e.g. Clostridium spp.) and oral streptococci. The bactericidal activity of lantibiotics is based on depolarization of energized bacterial cytoplasmic membranes, initiated by the formation of aqueous transmembrane pores. The chain is Lantibiotic macedovicin from Streptococcus macedonicus (strain ACA-DC 198).